The following is a 175-amino-acid chain: Gamma-crystallin B (175 aa).

Beta/gamma crystallin 'Greek key' domains follow at residues 2-40 (GKITFFEDRSFQGRCYECSSDCPNLQTYFSRCNSVRVDS) and 41-83 (GCWM…CLIP). The connecting peptide stretch occupies residues 84–88 (QHSGT). Beta/gamma crystallin 'Greek key' domains lie at 89 to 129 (YRMR…NVME) and 130 to 172 (GCWV…RRVM).

This sequence belongs to the beta/gamma-crystallin family.

Functionally, crystallins are the dominant structural components of the vertebrate eye lens. This Mus musculus (Mouse) protein is Gamma-crystallin B (Crygb).